A 2896-amino-acid chain; its full sequence is 3'-5' exoribonuclease HELZ2 (2896 aa).

2 consecutive C3H1-type zinc fingers follow at residues 90–114 (VCHY…RSRE) and 217–246 (GQPP…HSAV). Residues 287 to 311 (LYCPACLVTCHSQEAFENHCASSEH) form a C2H2-type; atypical zinc finger. The C3H1-type 3 zinc finger occupies 327–357 (SPPPGLSKFELCPKPDLCEYGDACTKAHSAQ). Residues 770–1126 (VALIAGWGPG…VVLSTVHTCQ (357 aa)) form the UvrD-like helicase ATP-binding domain. ATP is bound at residue 791 to 798 (GPFGTGKT). Residues 810–1306 (RRPETKVLIC…ESTEAEDAEA (497 aa)) form an interaction with THRAP3 region. The DEAA box motif lies at 914-917 (DEAA). The residue at position 1253 (serine 1253) is a Phosphoserine. 3 consecutive short sequence motifs (LXXLL motif) follow at residues 1322 to 1326 (LRELL), 1365 to 1369 (LRKLL), and 1420 to 1424 (LVQLL). One can recognise an RNB domain in the interval 1581 to 1938 (REDCRAFLTF…VLQRQILLAL (358 aa)). Positions 2259–2263 (LEGLP) match the LXXLL motif 4 motif. Residues 2382-2896 (PSRFLERQTY…RVCRRPTMPS (515 aa)) form an interaction with THRAP3 region. Residues 2400–2675 (LNPSQNVAVR…HMLDTQYRMH (276 aa)) enclose the UvrD-like helicase ATP-binding 2 domain. 2421-2428 (GPPGTGKT) provides a ligand contact to ATP. The short motif at 2476 to 2480 (LAGLL) is the LXXLL motif 5 element.

This sequence belongs to the DNA2/NAM7 helicase family. Interacts with PPARA (via DNA-binding domain) and PPARG; the interaction stimulates the transcriptional activity of PPARA and PPARG. Interacts with THRAP3; the interaction is direct and HELZ2 and THRAP3 synergistically enhance the transcriptional activity of PPARG. It is probably part of the peroxisome proliferator activated receptor alpha interacting complex (PRIC). As to expression, expressed in various tissues including heart, pancreas, skeletal muscle, colon, spleen, liver, kidney, lung, peripheral blood and placenta.

It is found in the cytoplasm. The enzyme catalyses Exonucleolytic cleavage in the 3'- to 5'-direction to yield nucleoside 5'-phosphates.. The catalysed reaction is ATP + H2O = ADP + phosphate + H(+). Its function is as follows. Can degrade highly structured RNAs through its concerted ATP-dependent RNA helicase and 3' to 5' exoribonuclease activities. Shows a strong preference for pyrimidine over purine residues for its nuclease activity. Acts as a transcriptional coactivator for a number of nuclear receptors including PPARA, PPARG, THRA, THRB and RXRA. In Homo sapiens (Human), this protein is 3'-5' exoribonuclease HELZ2.